Consider the following 819-residue polypeptide: Advillin (819 aa).

The tract at residues 1–731 (MSLSSAFRAV…YEQLKNELGD (731 aa)) is core. The Gelsolin-like 1 repeat unit spans residues 24–73 (MELALVPLSAHGNFYEGDCYIVLSTRRVGSLLSQNIHFWIGKDSSQDEQS). Phosphotyrosine is present on Tyr85. A 1,2-diacyl-sn-glycero-3-phospho-(1D-myo-inositol-4,5-bisphosphate) contacts are provided by residues 109-116 (KQGIIYKK) and 135-143 (RLLHVKGKR). Gelsolin-like repeat units follow at residues 145–185 (IQAT…GERL), 262–306 (LSVT…VEKQ), 403–454 (ENLE…DELA), 525–565 (TKAV…DERA), and 628–669 (FLVT…TEKK). The interval 628-819 (FLVTEVTDFT…LQLKKERGLF (192 aa)) is required for interaction with F-actin. The segment at 732–819 (ATAIVRITAD…LQLKKERGLF (88 aa)) is headpiece. 2 positions are modified to phosphotyrosine: Tyr748 and Tyr758. The HP domain maps to 753-819 (DGEPKYYPVE…LQLKKERGLF (67 aa)).

This sequence belongs to the villin/gelsolin family. In terms of assembly, associates (via C-terminus) with actin. Interacts with F-actin. Interacts with SCARF1; the interaction occurs in embryonic dorsal root ganglions at 18 dpc and induces neurite-like outgrowth. Interacts with PLCE1. Interacts with ACTR2 and ACTR3; associates with the ARP2/3 complex. In terms of tissue distribution, most highly expressed in the endometrium of the uterus, the intestinal villi and the testes. Weaker expression also detected in the brain, dorsal root ganglions and on the surface of the tongue.

It is found in the cytoplasm. The protein localises to the cytoskeleton. The protein resides in the cell projection. It localises to the lamellipodium. Its subcellular location is the cell junction. It is found in the focal adhesion. The protein localises to the neuron projection. The protein resides in the axon. Functionally, ca(2+)-regulated actin-binding protein which plays an important role in actin bundling. May have a unique function in the morphogenesis of neuronal cells which form ganglia. Required for SREC1-mediated regulation of neurite-like outgrowth. Plays a role in regenerative sensory axon outgrowth and remodeling processes after peripheral injury in neonates. Involved in the formation of long fine actin-containing filopodia-like structures in fibroblast. Plays a role in ciliogenesis. In podocytes, controls lamellipodia formation through the regulation of EGF-induced diacylglycerol generation by PLCE1 and ARP2/3 complex assembly. The protein is Advillin of Mus musculus (Mouse).